The chain runs to 123 residues: Non-specific lipid-transfer protein 3 (123 aa).

The first 25 residues, 1 to 25, serve as a signal peptide directing secretion; it reads MASSGQLLKLVCLVAVMCCMAVGGP. Cystine bridges form between C33/C80, C43/C57, C58/C105, and C78/C119.

This sequence belongs to the plant LTP family.

Its function is as follows. Plant non-specific lipid-transfer proteins transfer phospholipids as well as galactolipids across membranes. May play a role in wax or cutin deposition in the cell walls of expanding epidermal cells and certain secretory tissues. This Prunus dulcis (Almond) protein is Non-specific lipid-transfer protein 3.